Consider the following 359-residue polypeptide: Fructose-bisphosphate aldolase 1 (359 aa).

Residue S50 participates in D-glyceraldehyde 3-phosphate binding. D83 (proton donor) is an active-site residue. The Zn(2+) site is built by H84, D105, E142, and H198. G199 contributes to the dihydroxyacetone phosphate binding site. A Zn(2+)-binding site is contributed by H232. Dihydroxyacetone phosphate contacts are provided by residues 233–235 (GSS) and 275–278 (NIDT).

The protein belongs to the class II fructose-bisphosphate aldolase family. As to quaternary structure, homodimer. It depends on Zn(2+) as a cofactor.

It carries out the reaction beta-D-fructose 1,6-bisphosphate = D-glyceraldehyde 3-phosphate + dihydroxyacetone phosphate. It functions in the pathway carbohydrate biosynthesis; Calvin cycle. It participates in carbohydrate degradation; glycolysis; D-glyceraldehyde 3-phosphate and glycerone phosphate from D-glucose: step 4/4. Functionally, catalyzes the aldol condensation of dihydroxyacetone phosphate (DHAP or glycerone-phosphate) with glyceraldehyde 3-phosphate (G3P) to form fructose 1,6-bisphosphate (FBP) in gluconeogenesis and the reverse reaction in glycolysis. This chain is Fructose-bisphosphate aldolase 1 (cfxA), found in Cereibacter sphaeroides (Rhodobacter sphaeroides).